The sequence spans 111 residues: UPF0339 protein in ptx operon 5'region (111 aa).

2 repeat units span residues 10 to 58 (DKAG…RYER) and 61 to 109 (SGAD…VVEV).

Belongs to the UPF0339 family. Duplicated subfamily.

The chain is UPF0339 protein in ptx operon 5'region from Stutzerimonas stutzeri (Pseudomonas stutzeri).